Reading from the N-terminus, the 1790-residue chain is Protein FAM186A (1790 aa).

The protein belongs to the FAM186 family.

The sequence is that of Protein FAM186A (FAM186A) from Mus musculus (Mouse).